Here is a 340-residue protein sequence, read N- to C-terminus: Ferrochelatase (340 aa).

Fe cation contacts are provided by His-189 and Glu-292.

It belongs to the ferrochelatase family.

The protein resides in the cytoplasm. It catalyses the reaction heme b + 2 H(+) = protoporphyrin IX + Fe(2+). The protein operates within porphyrin-containing compound metabolism; protoheme biosynthesis; protoheme from protoporphyrin-IX: step 1/1. In terms of biological role, catalyzes the ferrous insertion into protoporphyrin IX. This is Ferrochelatase from Pseudomonas aeruginosa (strain UCBPP-PA14).